The chain runs to 353 residues: Nicotinate-nucleotide--dimethylbenzimidazole phosphoribosyltransferase (353 aa).

Residue Glu-318 is the Proton acceptor of the active site.

Belongs to the CobT family.

The enzyme catalyses 5,6-dimethylbenzimidazole + nicotinate beta-D-ribonucleotide = alpha-ribazole 5'-phosphate + nicotinate + H(+). The protein operates within nucleoside biosynthesis; alpha-ribazole biosynthesis; alpha-ribazole from 5,6-dimethylbenzimidazole: step 1/2. Functionally, catalyzes the synthesis of alpha-ribazole-5'-phosphate from nicotinate mononucleotide (NAMN) and 5,6-dimethylbenzimidazole (DMB). In Desulforudis audaxviator (strain MP104C), this protein is Nicotinate-nucleotide--dimethylbenzimidazole phosphoribosyltransferase.